Here is a 74-residue protein sequence, read N- to C-terminus: Cell division protein ZapB (74 aa).

Residues T2–S74 are a coiled coil.

Belongs to the ZapB family. Homodimer. The ends of the coiled-coil dimer bind to each other, forming polymers. Interacts with FtsZ.

It localises to the cytoplasm. Functionally, non-essential, abundant cell division factor that is required for proper Z-ring formation. It is recruited early to the divisome by direct interaction with FtsZ, stimulating Z-ring assembly and thereby promoting cell division earlier in the cell cycle. Its recruitment to the Z-ring requires functional FtsA or ZipA. In Psychromonas ingrahamii (strain DSM 17664 / CCUG 51855 / 37), this protein is Cell division protein ZapB.